The following is a 373-amino-acid chain: 3 beta-hydroxysteroid dehydrogenase/Delta 5--&gt;4-isomerase (373 aa).

Catalysis depends on tyrosine 155, which acts as the Proton acceptor. Residue lysine 159 participates in NAD(+) binding. A helical transmembrane segment spans residues 288 to 308 (ISLEYWLAFLLEIVSFLLSPI).

The protein belongs to the 3-beta-HSD family.

It localises to the endoplasmic reticulum membrane. The protein resides in the mitochondrion membrane. The enzyme catalyses a 3beta-hydroxy-Delta(5)-steroid + NAD(+) = a 3-oxo-Delta(5)-steroid + NADH + H(+). It catalyses the reaction a 3-oxo-Delta(5)-steroid = a 3-oxo-Delta(4)-steroid. Its pathway is lipid metabolism; steroid biosynthesis. Functionally, 3-beta-HSD is a bifunctional enzyme, that catalyzes the oxidative conversion of Delta(5)-ene-3-beta-hydroxy steroid, and the oxidative conversion of ketosteroids. The 3-beta-HSD enzymatic system plays a crucial role in the biosynthesis of all classes of hormonal steroids. The chain is 3 beta-hydroxysteroid dehydrogenase/Delta 5--&gt;4-isomerase (HSD3B) from Canis lupus familiaris (Dog).